The following is a 245-amino-acid chain: Chlorophyll a-b binding protein 1B-21, chloroplastic (245 aa).

A chloroplast-targeting transit peptide spans 1 to 44 (MASSSGLRSCSAVGVPSLLAPSSRSGRSGLPFCAYATTSGRVTM). W48 contributes to the chlorophyll b binding site. Chlorophyll a contacts are provided by F68, E87, and H90. Residue R92 participates in chlorophyll b binding. The helical transmembrane segment at 93–113 (WAMLCVPGVLVPEALGLGNWV) threads the bilayer. L129 is a chlorophyll a binding site. A helical membrane pass occupies residues 132–152 (PVPWGNLPTILAIEFLAIAFA). Chlorophyll b contacts are provided by V133, E153, and R156. Chlorophyll a is bound by residues K190, E191, N194, R196, Q208, and H224.

The protein belongs to the light-harvesting chlorophyll a/b-binding (LHC) protein family. In terms of assembly, the LHC complex consists of chlorophyll a-b binding proteins. The cofactor is Binds at least 14 chlorophylls (8 Chl-a and 6 Chl-b) and carotenoids such as lutein and neoxanthin.. Photoregulated by reversible phosphorylation of its threonine residues.

Its subcellular location is the plastid. The protein localises to the chloroplast thylakoid membrane. In terms of biological role, the light-harvesting complex (LHC) functions as a light receptor, it captures and delivers excitation energy to photosystems with which it is closely associated. This chain is Chlorophyll a-b binding protein 1B-21, chloroplastic (LHC Ib-21), found in Hordeum vulgare (Barley).